Here is a 1066-residue protein sequence, read N- to C-terminus: Pumilio homolog 2 (1066 aa).

The interval 1–260 is interaction with SNAPIN; that stretch reads MNHDFQALAL…TVGLFDYNSQ (260 aa). Residues serine 67, serine 70, serine 82, and serine 102 each carry the phosphoserine modification. 3 disordered regions span residues 106 to 203, 368 to 408, and 490 to 551; these read KLDS…GPLP, TANQ…AESL, and TGST…SASL. Over residues 119–133 the composition is skewed to basic and acidic residues; the sequence is RDAETDGPEKGDQKG. Residues serine 136, serine 177, and serine 181 each carry the phosphoserine modification. A Phosphothreonine modification is found at threonine 183. The segment covering 368–383 has biased composition (low complexity); that stretch reads TANQQAASQAQPGQQQ. Polar residues predominate over residues 394-406; sequence ITPSQGQQGQQAE. Threonine 395 carries the post-translational modification Phosphothreonine. Residues 503 to 514 are compositionally biased toward low complexity; sequence QPPQQQQQQQQP. A compositionally biased stretch (polar residues) spans 515 to 525; that stretch reads STNLQSNSFYG. The span at 526 to 540 shows a compositional bias: low complexity; that stretch reads SSSLTNSSQSSSLFS. Phosphoserine is present on residues serine 587 and serine 592. Residues 620 to 650 form a disordered region; sequence SPIGMPLPSQTPGHSLTPPPSLSSHGSSSSL. Over residues 630 to 650 the composition is skewed to low complexity; the sequence is TPGHSLTPPPSLSSHGSSSSL. At arginine 674 the chain carries Omega-N-methylarginine. Residues serine 684 and serine 700 each carry the phosphoserine modification. The 343-residue stretch at 706–1048 folds into the PUM-HD domain; sequence GRSRLLEDFR…HILAKLEKYY (343 aa). Pumilio repeat units lie at residues 726 to 761, 762 to 797, 798 to 835, 836 to 871, 872 to 907, 908 to 943, 944 to 979, and 980 to 1022; these read DLIGHIVEFSQDQHGSRFIQQKLERATPAERQIVFN, EILQAAYQLMTDVFGNYVIQKFFEFGSLDQKLALAT, RIRGHVLPLALQMYGCRVIQKALESISSDQQVISEMVK, ELDGHVLKCVKDQNGNHVVQKCIECVQPQSLQFIID, AFKGQVFVLSTHPYGCRVIQRILEHCTAEQTLPILE, ELHQHTEQLVQDQYGNYVIQHVLEHGRPEDKSKIVS, EIRGKVLALSQHKFASNVVEKCVTHASRAERALLID, and EVCC…IIMH. Residues 741–745 form an adenine-nucleotide binding in RNA target region; the sequence is SRFIQ. The tract at residues 777–781 is uracil-nucleotide binding in RNA target; the sequence is NYVIQ. An adenine-nucleotide binding in RNA target region spans residues 813–817; the sequence is CRVIQ. The tract at residues 851–855 is non-specific-nucleotide binding in RNA target; it reads NHVVQ. Positions 887-891 are adenine-nucleotide binding in RNA target; that stretch reads CRVIQ. The interval 923–927 is uracil-nucleotide binding in RNA target; it reads NYVIQ. A guanine-nucleotide binding in RNA target region spans residues 959-963; sequence SNVVE. Residues 1002–1006 are uracil-nucleotide binding in RNA target; sequence NYVVQ.

As to quaternary structure, homodimer; homodimerizes in vitro. Interacts with DAZ1, DAZL and NANOS1 via its pumilio repeats. Interacts with NANOS3. Interacts with SNAPIN. Recruits the CCR4-POP2-NOT deadenylase leading to translational inhibition and mRNA degradation. Interacts with DDX20. In case of viral infection, interacts with DHX58. In terms of tissue distribution, widely expressed. Expressed in embryonic stem cells, heart, kidney, lung, skin, intestine, spleen and thymus. Expressed at intermediate level in brain and liver. Weakly or not expressed in muscles and stomach. Expressed at various stages of myeloid and lymphoid cell development. In the testis expressed in the spermatogoni, spermatocytes, spermatids and Sertoli cells.

The protein resides in the cytoplasm. It is found in the cytoplasmic granule. The protein localises to the perinuclear region. In terms of biological role, sequence-specific RNA-binding protein that acts as a post-transcriptional repressor by binding the 3'-UTR of mRNA targets. Binds to an RNA consensus sequence, the Pumilio Response Element (PRE), 5'-UGUANAUA-3', that is related to the Nanos Response Element (NRE). Mediates post-transcriptional repression of transcripts via different mechanisms: acts via direct recruitment of the CCR4-POP2-NOT deadenylase leading to translational inhibition and mRNA degradation. Also mediates deadenylation-independent repression by promoting accessibility of miRNAs. Acts as a post-transcriptional repressor of E2F3 mRNAs by binding to its 3'-UTR and facilitating miRNA regulation. Plays a role in cytoplasmic sensing of viral infection. Represses a program of genes necessary to maintain genomic stability such as key mitotic, DNA repair and DNA replication factors. Its ability to repress those target mRNAs is regulated by the lncRNA NORAD (non-coding RNA activated by DNA damage) which, due to its high abundance and multitude of PUMILIO binding sites, is able to sequester a significant fraction of PUM1 and PUM2 in the cytoplasm. May regulate DCUN1D3 mRNA levels. May support proliferation and self-renewal of stem cells. Binds specifically to miRNA MIR199A precursor, with PUM1, regulates miRNA MIR199A expression at a postranscriptional level. The sequence is that of Pumilio homolog 2 (Pum2) from Mus musculus (Mouse).